The chain runs to 412 residues: F-box/WD repeat-containing protein 4 (412 aa).

In terms of domain architecture, F-box spans 25–71 (GPALWRLPEELLLLICSYLDMRALGRLAQVCRWLRRFTSCDLLWRRI). 6 WD repeats span residues 154–190 (RPLGVFAGHDEDVCHFVLANSHIVSAGGDGKIGIHKI), 193–229 (TFTVKYSAHEQEVNCVDCKGGIIVSGSRDRTAKVWPL), 236–277 (QCLH…IWDL), 283–321 (MTHLGSDFPPGAGVLDVMYESPFTLLSCGYDTYVRYWDL), 327–366 (KCVMEWEEPHDSTLYCLQTDGNHLLATGSSYYGVVRLWDR), and 373–409 (HAFPLTSTPLSSPVYCLRLTTKHLYAALSYNLHVLDF).

In terms of assembly, part of a SCF (SKP1-cullin-F-box) protein ligase complex. Interacts with POUF51. In terms of tissue distribution, expressed in brain, kidney, lung and liver.

In terms of biological role, probably recognizes and binds to some phosphorylated proteins and promotes their ubiquitination and degradation. Likely to be involved in key signaling pathways crucial for normal limb development. May participate in Wnt signaling. In Homo sapiens (Human), this protein is F-box/WD repeat-containing protein 4 (FBXW4).